The primary structure comprises 167 residues: Shikimate kinase (167 aa).

12–17 (GSGKTT) is a binding site for ATP. A Mg(2+)-binding site is contributed by Thr-16. The substrate site is built by Asp-34, Arg-58, and Gly-80. Residue Arg-117 participates in ATP binding. Arg-135 provides a ligand contact to substrate. Residue Arg-152 participates in ATP binding.

Belongs to the shikimate kinase family. In terms of assembly, monomer. It depends on Mg(2+) as a cofactor.

It localises to the cytoplasm. The catalysed reaction is shikimate + ATP = 3-phosphoshikimate + ADP + H(+). The protein operates within metabolic intermediate biosynthesis; chorismate biosynthesis; chorismate from D-erythrose 4-phosphate and phosphoenolpyruvate: step 5/7. In terms of biological role, catalyzes the specific phosphorylation of the 3-hydroxyl group of shikimic acid using ATP as a cosubstrate. The sequence is that of Shikimate kinase from Salinispora tropica (strain ATCC BAA-916 / DSM 44818 / JCM 13857 / NBRC 105044 / CNB-440).